The sequence spans 200 residues: Protein GrpE (200 aa).

Residues 1-11 are compositionally biased toward polar residues; sequence MSNQTNKAQDN. Residues 1–29 are disordered; the sequence is MSNQTNKAQDNQVEEIVEGELLNENGTEA.

Belongs to the GrpE family. In terms of assembly, homodimer.

It localises to the cytoplasm. Participates actively in the response to hyperosmotic and heat shock by preventing the aggregation of stress-denatured proteins, in association with DnaK and GrpE. It is the nucleotide exchange factor for DnaK and may function as a thermosensor. Unfolded proteins bind initially to DnaJ; upon interaction with the DnaJ-bound protein, DnaK hydrolyzes its bound ATP, resulting in the formation of a stable complex. GrpE releases ADP from DnaK; ATP binding to DnaK triggers the release of the substrate protein, thus completing the reaction cycle. Several rounds of ATP-dependent interactions between DnaJ, DnaK and GrpE are required for fully efficient folding. This is Protein GrpE from Shewanella halifaxensis (strain HAW-EB4).